We begin with the raw amino-acid sequence, 251 residues long: Diphthine synthase (251 aa).

S-adenosyl-L-methionine is bound by residues Asp-83, Leu-86, 111–112 (SI), Leu-163, and Leu-205.

Belongs to the diphthine synthase family. Homodimer.

It catalyses the reaction 2-[(3S)-amino-3-carboxypropyl]-L-histidyl-[translation elongation factor 2] + 3 S-adenosyl-L-methionine = diphthine-[translation elongation factor 2] + 3 S-adenosyl-L-homocysteine + 3 H(+). The protein operates within protein modification; peptidyl-diphthamide biosynthesis. Its function is as follows. S-adenosyl-L-methionine-dependent methyltransferase that catalyzes the trimethylation of the amino group of the modified target histidine residue in translation elongation factor 2 (EF-2), to form an intermediate called diphthine. The three successive methylation reactions represent the second step of diphthamide biosynthesis. The chain is Diphthine synthase from Pyrobaculum calidifontis (strain DSM 21063 / JCM 11548 / VA1).